Reading from the N-terminus, the 221-residue chain is CASP-like protein 4B1 (221 aa).

A disordered region spans residues 1–78 (MAMQLHAASP…HDHHGGGGGG (78 aa)). Topologically, residues 1 to 87 (MAMQLHAASP…GDEATQLLNG (87 aa)) are cytoplasmic. Residues 19–33 (SPPPPPPLSPHPEPA) are compositionally biased toward pro residues. Residues 50–62 (APVATATTPLTPG) show a composition bias toward low complexity. The helical transmembrane segment at 88–108 (IVLVLRAGAALLSFVAMALVA) threads the bilayer. Topologically, residues 109–125 (SCRHGDWMDFLRYQEYR) are extracellular. The helical transmembrane segment at 126–146 (YLLGVSVVAFVYSAAQALKNF) threads the bilayer. The Cytoplasmic portion of the chain corresponds to 147–160 (RRRRRGAADASFLD). The helical transmembrane segment at 161–181 (FAGDQAVAYLLVTASAAALPI) threads the bilayer. Residues 182–196 (TIRMRSAVVNVFTDA) lie on the Extracellular side of the membrane. The chain crosses the membrane as a helical span at residues 197-217 (IAASIALGFLAFAALALSAML). At 218-221 (SRHA) the chain is on the cytoplasmic side.

Belongs to the Casparian strip membrane proteins (CASP) family. As to quaternary structure, homodimer and heterodimers.

The protein localises to the cell membrane. The protein is CASP-like protein 4B1 of Hordeum vulgare subsp. vulgare (Domesticated barley).